The sequence spans 346 residues: Phosphoribosylformylglycinamidine cyclo-ligase (346 aa).

It belongs to the AIR synthase family.

The protein resides in the cytoplasm. It catalyses the reaction 2-formamido-N(1)-(5-O-phospho-beta-D-ribosyl)acetamidine + ATP = 5-amino-1-(5-phospho-beta-D-ribosyl)imidazole + ADP + phosphate + H(+). It functions in the pathway purine metabolism; IMP biosynthesis via de novo pathway; 5-amino-1-(5-phospho-D-ribosyl)imidazole from N(2)-formyl-N(1)-(5-phospho-D-ribosyl)glycinamide: step 2/2. The chain is Phosphoribosylformylglycinamidine cyclo-ligase from Bacillus anthracis (strain A0248).